A 704-amino-acid chain; its full sequence is Mannan-binding lectin serine protease 1 (704 aa).

The N-terminal stretch at 1-24 is a signal peptide; the sequence is MRFLSFWRLLLYHALCLALPEVSA. Residues 25–143 enclose the CUB 1 domain; the sequence is HTVELNEMFG…TGFDAHYMAV (119 aa). The segment at 25 to 189 is homodimerization; the sequence is HTVELNEMFG…HTDNRTCRVE (165 aa). The segment at 25-189 is interaction with MBL2; it reads HTVELNEMFG…HTDNRTCRVE (165 aa). Residues 25-283 form an interaction with FCN2 region; sequence HTVELNEMFG…STQTHSVQIL (259 aa). The segment at 25-305 is interaction with MBL1; sequence HTVELNEMFG…RLSYRAAGNE (281 aa). N-linked (GlcNAc...) asparagine glycosylation occurs at Asn-54. 7 residues coordinate Ca(2+): Glu-73, Asp-81, Asp-126, Ser-128, Asp-144, Val-145, and Glu-147. Cys-78 and Cys-96 form a disulfide bridge. Positions 144 to 187 constitute an EGF-like; calcium-binding domain; it reads DVDECKEREDEELSCDHYCHNYIGGYYCSCRFGYILHTDNRTCR. Intrachain disulfides connect Cys-148–Cys-162, Cys-158–Cys-171, Cys-173–Cys-186, and Cys-190–Cys-217. Ca(2+) is bound by residues Asn-164, Tyr-165, and Gly-168. Asn-164 is subject to (3R)-3-hydroxyasparagine. Residue Asn-183 is glycosylated (N-linked (GlcNAc...) asparagine). The 113-residue stretch at 190-302 folds into the CUB 2 domain; it reads CSGNLFTQRT…RGWRLSYRAA (113 aa). Ca(2+) is bound by residues Glu-240, Asp-250, Asp-287, and Ser-289. Cys-247 and Cys-265 are disulfide-bonded. 2 consecutive Sushi domains span residues 304–369 and 370–439; these read NECP…TCKI and VDCG…TCLP. 8 disulfides stabilise this stretch: Cys-306–Cys-354, Cys-334–Cys-367, Cys-372–Cys-419, Cys-402–Cys-437, Cys-441–Cys-577, Cys-480–Cys-496, Cys-619–Cys-636, and Cys-647–Cys-677. 2 N-linked (GlcNAc...) asparagine glycosylation sites follow: Asn-390 and Asn-412. The Peptidase S1 domain maps to 454–701; the sequence is IFNGRPAQKG…NKDWIQRITG (248 aa). Active-site charge relay system residues include His-495 and Asp-557. Ser-651 serves as the catalytic Charge relay system.

The protein belongs to the peptidase S1 family. In terms of assembly, homodimer. Interacts with the oligomeric lectins MBL2, FCN2 and FCN3; triggers the lectin pathway of complement through activation of C3. Interacts with SERPING1. Interacts with COLEC11; probably triggers the lectin pathway of complement. In terms of processing, the iron and 2-oxoglutarate dependent 3-hydroxylation of aspartate and asparagine is (R) stereospecific within EGF domains. Post-translationally, N-glycosylated. Some N-linked glycan are of the complex-type. Autoproteolytic processing of the proenzyme produces the active enzyme composed on the heavy and the light chain held together by a disulfide bond. Isoform 1 but not isoform 2 is activated through autoproteolytic processing. As to expression, protein of the plasma which is primarily expressed by liver.

It is found in the secreted. Its activity is regulated as follows. Inhibited by SERPING1 and A2M. Functions in the lectin pathway of complement, which performs a key role in innate immunity by recognizing pathogens through patterns of sugar moieties and neutralizing them. The lectin pathway is triggered upon binding of mannan-binding lectin (MBL) and ficolins to sugar moieties which leads to activation of the associated proteases MASP1 and MASP2. Functions as an endopeptidase and may activate MASP2 or C2 or directly activate C3 the key component of complement reaction. Isoform 2 may have an inhibitory effect on the activation of the lectin pathway of complement or may cleave IGFBP5. Also plays a role in development. The chain is Mannan-binding lectin serine protease 1 (Masp1) from Mus musculus (Mouse).